A 159-amino-acid polypeptide reads, in one-letter code: Ribosomal RNA large subunit methyltransferase H (159 aa).

Residues L76, G108, and 127-132 (FSKMTF) contribute to the S-adenosyl-L-methionine site.

This sequence belongs to the RNA methyltransferase RlmH family. Homodimer.

The protein resides in the cytoplasm. The enzyme catalyses pseudouridine(1915) in 23S rRNA + S-adenosyl-L-methionine = N(3)-methylpseudouridine(1915) in 23S rRNA + S-adenosyl-L-homocysteine + H(+). Specifically methylates the pseudouridine at position 1915 (m3Psi1915) in 23S rRNA. The protein is Ribosomal RNA large subunit methyltransferase H of Bifidobacterium adolescentis (strain ATCC 15703 / DSM 20083 / NCTC 11814 / E194a).